The following is a 147-amino-acid chain: Large ribosomal subunit protein uL15 (147 aa).

The interval 1-55 (MKLDNLAPQPGAKKRKRRVGRGIAAGQGASCGFGMRGQKSRSGRPTRPGFEGGQM) is disordered. Over residues 23 to 35 (IAAGQGASCGFGM) the composition is skewed to gly residues.

The protein belongs to the universal ribosomal protein uL15 family. Part of the 50S ribosomal subunit.

Binds to the 23S rRNA. In Synechococcus elongatus (strain ATCC 33912 / PCC 7942 / FACHB-805) (Anacystis nidulans R2), this protein is Large ribosomal subunit protein uL15.